The sequence spans 163 residues: Bacterial ISG15-like ubiquitin-like protein BilA (163 aa).

2 consecutive Ubiquitin-like BIL-type domains span residues 4–80 and 81–163; these read LVVF…RCKR and IRAT…RIEG. A Glycyl lysine isopeptide (Gly-Lys) (interchain with K-? in central tail fiber acceptor protein) cross-link involves residue Gly163.

Its function is as follows. Component of the Bil (bacterial ISG15-like) antiviral defense system, composed of BilA, BilB, BilC and BilD. The Bil system specifically conjugates a ubiquitin-like moiety (bilA) to the bacteriophage central tail fiber (CTF, or tip attachment protein J) via reactions involving E1 (bilD) and E2 (bilB). Modifies CTF of phage SECphi27 and SECphi4, which probably interferes with assembly of the phage tail. Also modifies T5 baseplate hub protein pb3 (gene D16), but not gp27 of phage T6 (Bil defends against T6). Bil-encoding bacteria produce mostly defective phage SECphi27, many of which have phage assembly defects, including no tails. SECphi27 phage progeny produced in E.coli with the Bil system inject less DNA into naive host cells, maybe because the phage are less able to adsorb and inject their DNA into host cells. Functionally, expression of the Bil system in E.coli (strain MG1655) confers about 100-fold resistance to phage SECphi27, SECphi18, SECphi6, SECphi4 and T5, but not to SECphi17. When cells expressing the Bil system are infected by phage SECphi27 at low multiplicity of infection (0.03 MOI) the culture survives, at 3.0 MOI the culture collapses at the same time as cells without the Bil system. This is Bacterial ISG15-like ubiquitin-like protein BilA from Collimonas sp. (strain OK412).